We begin with the raw amino-acid sequence, 78 residues long: Large ribosomal subunit protein bL28 (78 aa).

A disordered region spans residues 1 to 30 (MAAHCQVTGAGPGFGHSISHSHRRTKRRFD).

The protein belongs to the bacterial ribosomal protein bL28 family.

The chain is Large ribosomal subunit protein bL28 from Micrococcus luteus (strain ATCC 4698 / DSM 20030 / JCM 1464 / CCM 169 / CCUG 5858 / IAM 1056 / NBRC 3333 / NCIMB 9278 / NCTC 2665 / VKM Ac-2230) (Micrococcus lysodeikticus).